A 217-amino-acid chain; its full sequence is ATP-dependent Clp protease proteolytic subunit (217 aa).

The Nucleophile role is filled by serine 121. Histidine 146 is a catalytic residue.

Belongs to the peptidase S14 family. Fourteen ClpP subunits assemble into 2 heptameric rings which stack back to back to give a disk-like structure with a central cavity, resembling the structure of eukaryotic proteasomes.

It localises to the cytoplasm. It catalyses the reaction Hydrolysis of proteins to small peptides in the presence of ATP and magnesium. alpha-casein is the usual test substrate. In the absence of ATP, only oligopeptides shorter than five residues are hydrolyzed (such as succinyl-Leu-Tyr-|-NHMec, and Leu-Tyr-Leu-|-Tyr-Trp, in which cleavage of the -Tyr-|-Leu- and -Tyr-|-Trp bonds also occurs).. Functionally, cleaves peptides in various proteins in a process that requires ATP hydrolysis. Has a chymotrypsin-like activity. Plays a major role in the degradation of misfolded proteins. This chain is ATP-dependent Clp protease proteolytic subunit, found in Burkholderia vietnamiensis (strain G4 / LMG 22486) (Burkholderia cepacia (strain R1808)).